The following is a 401-amino-acid chain: Acetate kinase (401 aa).

N9 lines the Mg(2+) pocket. K16 lines the ATP pocket. R88 lines the substrate pocket. D147 functions as the Proton donor/acceptor in the catalytic mechanism. ATP-binding positions include 207–211 (HLGNG), 282–284 (DCR), and 333–337 (GIGEN). Position 388 (E388) interacts with Mg(2+).

It belongs to the acetokinase family. As to quaternary structure, homodimer. Requires Mg(2+) as cofactor. Mn(2+) is required as a cofactor.

Its subcellular location is the cytoplasm. It catalyses the reaction acetate + ATP = acetyl phosphate + ADP. The protein operates within metabolic intermediate biosynthesis; acetyl-CoA biosynthesis; acetyl-CoA from acetate: step 1/2. In terms of biological role, catalyzes the formation of acetyl phosphate from acetate and ATP. Can also catalyze the reverse reaction. This Haemophilus influenzae (strain ATCC 51907 / DSM 11121 / KW20 / Rd) protein is Acetate kinase.